Consider the following 249-residue polypeptide: Large ribosomal subunit protein uL22m (249 aa).

A mitochondrion-targeting transit peptide spans 1–22 (MKYINQFMKISKGFLVPSSTIG). The segment at 70 to 98 (ANQKDDSNRQQKEERVKERPRSRISFKKQ) is disordered. The segment covering 72–98 (QKDDSNRQQKEERVKERPRSRISFKKQ) has biased composition (basic and acidic residues).

Belongs to the universal ribosomal protein uL22 family. Component of the mitochondrial large ribosomal subunit (mt-LSU). Mature yeast 74S mitochondrial ribosomes consist of a small (37S) and a large (54S) subunit. The 37S small subunit contains a 15S ribosomal RNA (15S mt-rRNA) and at least 32 different proteins. The 54S large subunit contains a 21S rRNA (21S mt-rRNA) and at least 45 different proteins. uL22m forms the wall of the exit tunnel.

Its subcellular location is the mitochondrion. Functionally, component of the mitochondrial ribosome (mitoribosome), a dedicated translation machinery responsible for the synthesis of mitochondrial genome-encoded proteins, including at least some of the essential transmembrane subunits of the mitochondrial respiratory chain. The mitoribosomes are attached to the mitochondrial inner membrane and translation products are cotranslationally integrated into the membrane. This is Large ribosomal subunit protein uL22m (mrpl22) from Schizosaccharomyces pombe (strain 972 / ATCC 24843) (Fission yeast).